Here is a 207-residue protein sequence, read N- to C-terminus: MKIINAAFIRSVSALQDLPDERVPEIVFAGRSNVGKSSLLNSLTGRKGLAKTSSTPGKTRLLNYFLINDDLYFVDIPGYGYAAVSHTEKDAWGRLLAGYVGGRQAIALVVLLLDSRHPAMESDREMMEFLAYHDRPYGIVLTKDDKLTQKERAKAKRVTASCALNAEFIVSYSSISGKGKKELLAHFDHYLSGESSGAGSDSAVTVT.

Residues 22 to 193 (RVPEIVFAGR…LAHFDHYLSG (172 aa)) enclose the EngB-type G domain. GTP is bound by residues 30-37 (GRSNVGKS), 57-61 (GKTRL), 75-78 (DIPG), 142-145 (TKDD), and 172-174 (YSS). Serine 37 and threonine 59 together coordinate Mg(2+).

It belongs to the TRAFAC class TrmE-Era-EngA-EngB-Septin-like GTPase superfamily. EngB GTPase family. Requires Mg(2+) as cofactor.

Its function is as follows. Necessary for normal cell division and for the maintenance of normal septation. This Chlorobium luteolum (strain DSM 273 / BCRC 81028 / 2530) (Pelodictyon luteolum) protein is Probable GTP-binding protein EngB.